The primary structure comprises 755 residues: MAAVAAEAAATAASPGEGGAGEAEPEMEPIPGSEAGTDPLPVTATEASVPDGETDGQQSAPQADEPPLPPPPPPPGELARSPEAVGPELEAEEKLSVRVAESAAAAPQGGPELPPSPASPPEQPPAPEEREEPPLPQPVAPALVPPAGGDSTVSQLIPGSEVRVTLDHIIEDALVVSFRFGEKLFSGVLMDLSKRFGPHGIPVTVFPKREYKDKPEAMPLQSNTFQEGTEVKCEANGAVPDDPSPVPHPELSLAESLWTSKPPPLFHEGAPYPPPLFIRDTYNQSIPQPPPRKIKRPKRKMYREEPTSIMNAIKLRPRQVLCDKCKNSVVAEKKEIRKGSSATDSSKYEDKKRRNESVTTVNKKLKTDHKVDGKNQNESQKRNAVVKVSNIAHSRGRVVKVSAQANTSKAQLSTKKVLQSKNMDHAKAREVLKIAKEKAQKKQNETSTSKNAHSKVHFTRRYQNPSSGSLPPRVRLKPQRYRNEENDSSLKTGLEKMRSGKMAPKPQSRCTSTRSAGEAPSENQSPSKGPEEASSEVQDTNEVHVPGDQDEPQTLGKKGSKNNISVYMTLNQKKSDSSSASVCSIDSTDDLKSSNSECSSSESFDFPPGSMHAPSTSSTSSSSKEEKKLSNSLKMKVFSKNVSKCVTPDGRTICVGDIVWAKIYGFPWWPARILTITVSRKDNGLLVRQEARISWFGSPTTSFLALSQLSPFLENFQSRFNKKRKGLYRKAITEAAKAAKQLTPEVRALLTQFET.

Over residues 1–15 the composition is skewed to low complexity; sequence MAAVAAEAAATAASP. A disordered region spans residues 1-153; sequence MAAVAAEAAA…VPPAGGDSTV (153 aa). The span at 64-76 shows a compositional bias: pro residues; the sequence is DEPPLPPPPPPPG. Phosphoserine is present on residues S81, S102, S116, and S119. The span at 112-126 shows a compositional bias: pro residues; sequence ELPPSPASPPEQPPA. The interval 148–373 is interaction with HDAC1 and MTA1; the sequence is GGDSTVSQLI…KLKTDHKVDG (226 aa). K208 participates in a covalent cross-link: Glycyl lysine isopeptide (Lys-Gly) (interchain with G-Cter in SUMO2). 4 disordered regions span residues 282 to 301, 334 to 384, 400 to 562, and 578 to 626; these read YNQS…KRKM, KEIR…KRNA, KVSA…GSKN, and SSAS…SKEE. Residues 292–301 are compositionally biased toward basic residues; the sequence is RKIKRPKRKM. Basic and acidic residues-rich tracts occupy residues 346 to 356 and 368 to 381; these read SKYEDKKRRNE and DHKV…ESQK. Residues 403–421 are compositionally biased toward polar residues; it reads AQANTSKAQLSTKKVLQSK. A compositionally biased stretch (basic and acidic residues) spans 422-444; sequence NMDHAKAREVLKIAKEKAQKKQN. The segment at 423–574 is interaction with the H2A.Z/H2AZ1; it reads MDHAKAREVL…SVYMTLNQKK (152 aa). A compositionally biased stretch (polar residues) spans 508 to 527; it reads SRCTSTRSAGEAPSENQSPS. Positions 593–603 are enriched in low complexity; sequence SSNSECSSSES. The PWWP domain maps to 655 to 715; that stretch reads VGDIVWAKIY…LSQLSPFLEN (61 aa).

As to quaternary structure, component of a MTA1-specific subcomplex of the NuRD complex (M1HR), composed of PWWP2A, MTA1/2, HDAC1/2, and RBBP4/7 but does not contain CHD4 and MBD3. Interacts with MTA1; the interaction mediates the association of PWWP2A with the M1HR complex. Interacts with H2A.Z/H2AZ1. Interacts (via PWWP domain) with histone H3 trimethylated at 'Lys-36' (H3K36me3). Does not interact with CHD4 and MBD3. Interacts with MTA1 and with HDAC1 in a MTA1-dependent manner. Does not interact with CHD4 and MBD3.

It is found in the nucleus. Chromatin-binding protein that acts as an adapter between distinct nucleosome components (H3K36me3 or H2A.Z) and chromatin-modifying complexes, contributing to the regulation of the levels of histone acetylation at actively transcribed genes. Competes with CHD4 and MBD3 for interaction with MTA1 to form a NuRD subcomplex, preventing the formation of full NuRD complex (containing CHD4 and MBD3), leading to recruitment of HDACs to gene promoters resulting in turn in the deacetylation of nearby H3K27 and H2A.Z. Plays a role in facilitating transcriptional elongation and repression of spurious transcription initiation through regulation of histone acetylation. Essential for proper mitosis progression. The polypeptide is PWWP domain-containing protein 2A (PWWP2A) (Homo sapiens (Human)).